A 635-amino-acid chain; its full sequence is Threonine--tRNA ligase (635 aa).

The TGS domain maps to 1 to 61 (MVSIRLPDGS…DHDASLAIVT (61 aa)). The catalytic stretch occupies residues 242 to 533 (DHRKLGKQLD…LIEHHAGAMP (292 aa)). Residues C333, H384, and H510 each contribute to the Zn(2+) site.

Belongs to the class-II aminoacyl-tRNA synthetase family. In terms of assembly, homodimer. It depends on Zn(2+) as a cofactor.

It is found in the cytoplasm. The catalysed reaction is tRNA(Thr) + L-threonine + ATP = L-threonyl-tRNA(Thr) + AMP + diphosphate + H(+). Functionally, catalyzes the attachment of threonine to tRNA(Thr) in a two-step reaction: L-threonine is first activated by ATP to form Thr-AMP and then transferred to the acceptor end of tRNA(Thr). Also edits incorrectly charged L-seryl-tRNA(Thr). In Burkholderia multivorans (strain ATCC 17616 / 249), this protein is Threonine--tRNA ligase.